The sequence spans 476 residues: Dermokine (476 aa).

A signal peptide spans methionine 1–alanine 21. 4 stretches are compositionally biased toward gly residues: residues serine 153–glycine 169, tryptophan 193–proline 202, glycine 236–serine 259, and serine 268–glycine 298. Residues serine 153–serine 351 are disordered. Low complexity predominate over residues aspartate 299–glycine 315. A compositionally biased stretch (gly residues) spans asparagine 316 to histidine 326.

It belongs to the dermokine family. As to quaternary structure, homooligomer. Seems to be able to homodimerize and homotrimerize. In terms of processing, O-glycosylated. In terms of tissue distribution, expressed in epidermis; in the spinous and granular layers and in placenta. Also found in the epithelia of the small intestine, macrophages of the lung and endothelial cells of the lung. Isoform 15 is expressed in epidermis and placenta. Isoform 1 is expressed in epidermis.

The protein localises to the secreted. Functionally, may act as a soluble regulator of keratinocyte differentiation. This chain is Dermokine (DMKN), found in Homo sapiens (Human).